A 588-amino-acid polypeptide reads, in one-letter code: MDTSTSAYAPLPGEDPLFSGHPPASLRRSWKGFAVIFASVLFLLSLVGLIIHQGPQQPPDVMPDKQDEHHHPQSTTPASETTASWEPRGKALGVSAKSNPPVSDELSYNWTNAMFSWQRTAFHFQPERNWMNDPNGPLFYKGWYHLFYQYNPDSAIWGNITWGHAVSTDLIHWLYLPIAMVADQWYDANGVWSGSATLLPDGQIVMLYTGDTVDAVQVVCLAHPANLSDPLLLDWVKYSGNPVLTPPPGILTTDFRDPTTAWTGPDGKWRITIGSKVNTTGISFVYHTEDFKTYNMSKGVLHAVPGTGMWECIDFYPVAINGSKGVETSVNNPSVKHVLKASLDNTKVDHYALGTYFEENETWVPDNPGLDVGIGLRYDYGRYYASKTFYDQNKERRILRGWINETDTESDDLAKGWASVQTIPRTVLFDNKTGTNLIQWPVEEIEELRLNNTDFSDVLVEAGTVVELDIGTATQLDILVEFELEPLESSETVNSSVGCGGGAVDRGTFGPFGILVIADETLTELTPIYFNLANSTEGDVITYFCADERRSSKAPDVFKQVYGSEVPVLDGEKHFARVLRALRKEVGR.

Residues 1–31 lie on the Cytoplasmic side of the membrane; the sequence is MDTSTSAYAPLPGEDPLFSGHPPASLRRSWK. The propeptide at 1–115 is removed in mature form; it reads MDTSTSAYAP…LSYNWTNAMF (115 aa). A helical; Signal-anchor for type II membrane protein membrane pass occupies residues 32-52; that stretch reads GFAVIFASVLFLLSLVGLIIH. Residues 53 to 588 are Lumenal-facing; sequence QGPQQPPDVM…LRALRKEVGR (536 aa). Residues 57-86 form a disordered region; sequence QPPDVMPDKQDEHHHPQSTTPASETTASWE. The segment covering 62-71 has biased composition (basic and acidic residues); that stretch reads MPDKQDEHHH. The span at 73–84 shows a compositional bias: polar residues; it reads QSTTPASETTAS. Residues 130–133, Gln149, and Trp157 contribute to the substrate site; that span reads WMND. Residue Asp133 is part of the active site. Asn159 is a glycosylation site (N-linked (GlcNAc...) asparagine). 192-193 is a binding site for substrate; it reads WS. N-linked (GlcNAc...) asparagine glycosylation occurs at Asn226. Substrate contacts are provided by residues 256 to 257, Glu311, and Asp344; that span reads RD. An intrachain disulfide couples Cys499 to Cys545.

Belongs to the glycosyl hydrolase 32 family. As to quaternary structure, monomer. May be present in two forms, a 70 kDa monomer and a heterodimer of the 30 kDa and 38 kDa subunits. The ratio of the levels of the two forms within cells appears to be regulated developmentally. Post-translationally, glycosylated. As to expression, expressed in buds, stems, roots and leaves. Expressed in the epidermal cells of young leaves and of primordial leaves.

It is found in the membrane. The protein resides in the vacuole lumen. It carries out the reaction Hydrolysis of terminal non-reducing beta-D-fructofuranoside residues in beta-D-fructofuranosides.. Acidic vacuolar invertase involved in light-induced bud burst. The protein is Acid beta-fructofuranosidase 1, vacuolar of Rosa hybrid cultivar.